Here is a 318-residue protein sequence, read N- to C-terminus: Gamma-glutamyl hydrolase (318 aa).

Positions 1-24 (MASPGCLLCVLGLLLCGAASLELS) are cleaved as a signal peptide. The Gamma-glutamyl hydrolase domain occupies 25 to 318 (RPHGDTAKKP…SSFQQCYIFD (294 aa)). A glycan (N-linked (GlcNAc...) asparagine) is linked at N116. Residue C134 is the Nucleophile of the active site. 2 N-linked (GlcNAc...) asparagine glycosylation sites follow: N163 and N203. The active-site Proton donor is the H244. N307 is a glycosylation site (N-linked (GlcNAc...) asparagine; partial).

Belongs to the peptidase C26 family. In terms of assembly, homodimer.

Its subcellular location is the secreted. The protein localises to the extracellular space. It is found in the lysosome. It localises to the melanosome. The enzyme catalyses (6S)-5,6,7,8-tetrahydrofolyl-(gamma-L-Glu)(n) + (n-1) H2O = (6S)-5,6,7,8-tetrahydrofolate + (n-1) L-glutamate. Its function is as follows. Hydrolyzes the polyglutamate sidechains of pteroylpolyglutamates. Progressively removes gamma-glutamyl residues from pteroylpoly-gamma-glutamate to yield pteroyl-alpha-glutamate (folic acid) and free glutamate. May play an important role in the bioavailability of dietary pteroylpolyglutamates and in the metabolism of pteroylpolyglutamates and antifolates. The polypeptide is Gamma-glutamyl hydrolase (Homo sapiens (Human)).